Here is a 74-residue protein sequence, read N- to C-terminus: uncharacterized protein (74 aa).

A helical membrane pass occupies residues 15–32 (FLHALTVTFLSDIFVWLV).

The protein resides in the membrane. This is an uncharacterized protein from Saccharomyces cerevisiae (strain ATCC 204508 / S288c) (Baker's yeast).